Here is a 491-residue protein sequence, read N- to C-terminus: UDP-N-acetylmuramate--L-alanine ligase (491 aa).

An ATP-binding site is contributed by 126-132; sequence GTHGKTT.

The protein belongs to the MurCDEF family.

It localises to the cytoplasm. It catalyses the reaction UDP-N-acetyl-alpha-D-muramate + L-alanine + ATP = UDP-N-acetyl-alpha-D-muramoyl-L-alanine + ADP + phosphate + H(+). Its pathway is cell wall biogenesis; peptidoglycan biosynthesis. Functionally, cell wall formation. The sequence is that of UDP-N-acetylmuramate--L-alanine ligase from Salmonella agona (strain SL483).